The chain runs to 434 residues: MLIEPKMIGSSEGQALLESLLNRFQIGDSGCQSAVEDILTAVRQEGDAAVVKYCRRFDCPDMTASALAVTAAEIAAAYELVDAAFLETLAAAIERIHSFHEREMEDSWMQTREDGTIVGRLVRPVDSAGLYVPGGTGGSTPLVSSVLMNGIPAGIAGVTTRVMVTPPGKDGKISPHLLVAATEIGITEIYKAGSAWGIAALAYGTATIPRVDVIVGPGNQFVTEAKRLVSGMVRIDMIAGPSEVLIVADETADPVYIAADMLAQAEHDPQALSILLTTDRQVAEAVPAEIERQLKTLSRAEIAEKSIVDRAVILVVADIEEAIGLANDIAIEHLELMIVDPWAQVPHIRHAGAIFLGSHTPEAAGDYFAGPNHVLPTMGTARFASALGVETFLKKSSIISYSQTALQNDAEHIQRLANLEGLTAHANSVAVRVK.

Substrate is bound by residues Ser242, Gln264, and His267. Zn(2+) contacts are provided by Gln264 and His267. Active-site proton acceptor residues include Glu332 and His333. Substrate is bound by residues His333, Asp366, Glu420, and His425. Position 366 (Asp366) interacts with Zn(2+). His425 is a Zn(2+) binding site.

Belongs to the histidinol dehydrogenase family. Requires Zn(2+) as cofactor.

The catalysed reaction is L-histidinol + 2 NAD(+) + H2O = L-histidine + 2 NADH + 3 H(+). The protein operates within amino-acid biosynthesis; L-histidine biosynthesis; L-histidine from 5-phospho-alpha-D-ribose 1-diphosphate: step 9/9. Its function is as follows. Catalyzes the sequential NAD-dependent oxidations of L-histidinol to L-histidinaldehyde and then to L-histidine. The protein is Histidinol dehydrogenase of Desulfotalea psychrophila (strain LSv54 / DSM 12343).